We begin with the raw amino-acid sequence, 719 residues long: Probable disease resistance protein At4g14610 (719 aa).

Positions 25–73 (SLPENLAALQKAIEVLKTKHDDVKRRVDKEEFLGRRHRLSQVQVEIERL) form a coiled coil. One can recognise an NB-ARC domain in the interval 114–418 (EENLVAQVEE…NELEKILGCP (305 aa)). 156–163 (GMGGVGKT) contacts ATP. 3 LRR repeats span residues 400-421 (AVRR…PTCP), 422-444 (QLTT…FFRF), and 447-469 (NLVV…ISEV).

The protein belongs to the disease resistance NB-LRR family.

Probable disease resistance protein. The chain is Probable disease resistance protein At4g14610 from Arabidopsis thaliana (Mouse-ear cress).